The chain runs to 155 residues: Large ribosomal subunit protein uL11 (155 aa).

It belongs to the universal ribosomal protein uL11 family. Part of the ribosomal stalk of the 50S ribosomal subunit. Interacts with L10 and the large rRNA to form the base of the stalk. L10 forms an elongated spine to which L12 dimers bind in a sequential fashion forming a multimeric L10(L12)X complex. One or more lysine residues are methylated.

Functionally, forms part of the ribosomal stalk which helps the ribosome interact with GTP-bound translation factors. The protein is Large ribosomal subunit protein uL11 of Malacoplasma penetrans (strain HF-2) (Mycoplasma penetrans).